The following is a 385-amino-acid chain: Flavin-dependent monooxygenase (385 aa).

FAD-binding positions include Ala-12–Ala-15, Glu-34–Asn-36, Tyr-44–Asp-47, Arg-105, Tyr-267, Asp-289, and Pro-296–Thr-302.

This sequence belongs to the aromatic-ring hydroxylase family. It depends on FAD as a cofactor.

It carries out the reaction 7-chlorotetracycline + NADPH + O2 + H(+) = (1S,10S,10aS)-3-(CONH2)-9-Cl-1-(Me2N)-3,3a,4,10-(HO)4-10-Me-2,5-dioxo-1H,10aH,11H,11aH-cyclopenta[b]anthracen-6-olate + CO + NADP(+) + H2O. The enzyme catalyses a tetracycline + NADPH + O2 + H(+) = a (1S,10aS)-3-(CONH2)-1-(Me2N)-3,3a,4,6-(HO)4-2,5-dioxo-1H,10aH,11H,11aH-cyclopenta[b]anthracene + CO + NADP(+) + H2O. Its activity is regulated as follows. Inhibited by anhydrotetracycline. Functionally, an FAD-requiring monooxygenase active on tetracycline antibiotic and some of its derivatives, which leads to their inactivation. Expression in E.coli confers high resistance to oxytetracycline, slightly less resistance to tetracycline, moderate resistance to minocycline but no resistance to tigecycline. Degrades tetracycline and oxytetracycline; the reaction requires NADPH. Degrades and confers resistance to chlortetracycline. In Unknown prokaryotic organism, this protein is Flavin-dependent monooxygenase.